The sequence spans 347 residues: GMP reductase (347 aa).

108-131 lines the NADP(+) pocket; the sequence is ADFEKTKQILDLNPALNFVCIDVA. Glycine 181 and glycine 183 together coordinate K(+). Cysteine 186 acts as the Thioimidate intermediate in catalysis. Position 216–239 (216–239) interacts with NADP(+); that stretch reads IVSDGGCTTPGDVAKAFGGGADFV.

The protein belongs to the IMPDH/GMPR family. GuaC type 1 subfamily. In terms of assembly, homotetramer.

It catalyses the reaction IMP + NH4(+) + NADP(+) = GMP + NADPH + 2 H(+). Catalyzes the irreversible NADPH-dependent deamination of GMP to IMP. It functions in the conversion of nucleobase, nucleoside and nucleotide derivatives of G to A nucleotides, and in maintaining the intracellular balance of A and G nucleotides. This Shigella boydii serotype 4 (strain Sb227) protein is GMP reductase.